The sequence spans 305 residues: MRDALVVGAGPAGLTAAATLKQYGVEPLVIEAERVMATVYSYAWKPVENYPGFDGKRAIEIARAFEEMQKFFGVEVVEKERVVKAWKEGDKIVLGTQSGNEYEGKVLIIAIGILGKPRRLGIPNEDAPNVHYIVKDPTAFAGSKVVVVGGGDTAVDTATVLAESGAQVTIVHRRDQFRAPMRSIERMVRAGVKMVLNSVPKEIIAKDGKATALVVTHKEGGETVLPLDHLVISIGFEPPDLEWVKSLGVNMRGKEILVDDKMRTNVKGVFAAGDITPAPKRILVAAAQGYIAGFTAFRYIRTGVW.

E31, Y42, V82, and D274 together coordinate FAD.

The protein belongs to the ferredoxin--NADP reductase type 2 family. Homodimer. Requires FAD as cofactor.

The enzyme catalyses 2 reduced [2Fe-2S]-[ferredoxin] + NADP(+) + H(+) = 2 oxidized [2Fe-2S]-[ferredoxin] + NADPH. The chain is Ferredoxin--NADP reductase from Ignicoccus hospitalis (strain KIN4/I / DSM 18386 / JCM 14125).